We begin with the raw amino-acid sequence, 274 residues long: Large ribosomal subunit protein uL2 (274 aa).

The tract at residues 224–274 (AMNPVDHPHGGGEGRTGEGQVPVSPWNTMTKGYRTRSNKRTQTFIVSRRKK) is disordered. Residues 229–239 (DHPHGGGEGRT) are compositionally biased toward basic and acidic residues.

This sequence belongs to the universal ribosomal protein uL2 family. Part of the 50S ribosomal subunit. Forms a bridge to the 30S subunit in the 70S ribosome.

Functionally, one of the primary rRNA binding proteins. Required for association of the 30S and 50S subunits to form the 70S ribosome, for tRNA binding and peptide bond formation. It has been suggested to have peptidyltransferase activity; this is somewhat controversial. Makes several contacts with the 16S rRNA in the 70S ribosome. The polypeptide is Large ribosomal subunit protein uL2 (Methylibium petroleiphilum (strain ATCC BAA-1232 / LMG 22953 / PM1)).